The primary structure comprises 382 residues: 2-heptyl-3-hydroxy-4(1H)-quinolone synthase (382 aa).

The protein belongs to the 3-hydroxybenzoate 6-hydroxylase family.

It carries out the reaction 2-heptyl-4(1H)-quinolone + NADH + O2 + H(+) = 2-heptyl-3-hydroxy-4(1H)-quinolone + NAD(+) + H2O. Its function is as follows. Involved in the terminal step of the biosynthesis of quinolone which in addition to serve as a potent signal for quorum sensing, chelates iron and promotes the formation of membrane vesicles (MVs). Catalyzes the hydroxylation of 2-heptyl-4-quinolone (C7-HHQ) to yield 2-heptyl-3-hydroxy-4-quinolone (PQS). PqsH is also able to hydroxylate HHQ analogs having alkyl side-chain lengths of 3 (C3-HHQ), 5 (C5-HHQ) and 9 (C9-HHQ) carbons, however catalytic efficiencies are significantly reduced for substrates with alkyl side-chain lengths below 7 carbons. This is 2-heptyl-3-hydroxy-4(1H)-quinolone synthase (pqsH) from Pseudomonas aeruginosa (strain UCBPP-PA14).